We begin with the raw amino-acid sequence, 211 residues long: ATP phosphoribosyltransferase (211 aa).

It belongs to the ATP phosphoribosyltransferase family. Short subfamily. Heteromultimer composed of HisG and HisZ subunits.

It localises to the cytoplasm. The enzyme catalyses 1-(5-phospho-beta-D-ribosyl)-ATP + diphosphate = 5-phospho-alpha-D-ribose 1-diphosphate + ATP. Its pathway is amino-acid biosynthesis; L-histidine biosynthesis; L-histidine from 5-phospho-alpha-D-ribose 1-diphosphate: step 1/9. Its function is as follows. Catalyzes the condensation of ATP and 5-phosphoribose 1-diphosphate to form N'-(5'-phosphoribosyl)-ATP (PR-ATP). Has a crucial role in the pathway because the rate of histidine biosynthesis seems to be controlled primarily by regulation of HisG enzymatic activity. This Pseudomonas putida (strain W619) protein is ATP phosphoribosyltransferase.